The primary structure comprises 637 residues: Sodium-dependent phosphate transport protein 2A (637 aa).

Over 1 to 103 (MMSYSERLGG…LAQVGTKLLK (103 aa)) the chain is Cytoplasmic. Ser14 and Ser34 each carry phosphoserine. Residues 104–125 (VPLMLGFLYLFVCSLDVLSSAF) traverse the membrane as a helical segment. The Extracellular portion of the chain corresponds to 126-145 (QLAGGKVAGDIFKDNAILSN). Residues 146-163 (PVAGLVVGILVTVLVQSS) form a helical membrane-spanning segment. The Cytoplasmic segment spans residues 164-216 (STSTSIIVSMVSSGLLEVSSAIPIIMGSNIGTSVTNTIVALMQAGDRTDFRRA). The helical transmembrane segment at 217-236 (FAGATVHDCFNWLSVLVLLP) threads the bilayer. 2 disulfide bridges follow: Cys225-Cys520 and Cys306-Cys334. The Extracellular segment spans residues 237 to 345 (LEAATGYLHH…HIFVDTGLPD (109 aa)). Asn298 and Asn328 each carry an N-linked (GlcNAc...) asparagine glycan. The helical transmembrane segment at 346–368 (LAVGLILLAGSLVVLCTCLILLV) threads the bilayer. The Cytoplasmic portion of the chain corresponds to 369-410 (KMLNSLLKGQVANVIQKVINTDFPAPFTWVTGYFAMVVGASM). The chain crosses the membrane as a helical span at residues 411 to 434 (TFVVQSSSVFTSAITPLIGLGVIS). Over 435–464 (IERAYPLTLGSNIGTTTTAILAALASPREK) the chain is Extracellular. The chain crosses the membrane as a helical span at residues 465-485 (LSSSFQIALCHFFFNISGILL). The Cytoplasmic portion of the chain corresponds to 486–511 (WYPLPCTRLPIRMAKALGKRTAKYRW). Residue Thr506 is modified to Phosphothreonine; by PKC. The helical transmembrane segment at 512–532 (FAVLYLLVCFLLLPSLVFGIS) threads the bilayer. Topologically, residues 533-537 (MAGWQ) are extracellular. The helical transmembrane segment at 538 to 559 (AMVGVGTPFGALLAFVVLVNVL) threads the bilayer. Topologically, residues 560-637 (QSRSPGHLPK…LPAHHNATRL (78 aa)) are cytoplasmic. Position 605 is a phosphoserine (Ser605). Thr621 is modified (phosphothreonine). A Phosphoserine modification is found at Ser623.

The protein belongs to the SLC34A transporter family. In terms of assembly, interacts via its C-terminal region with NHERF4. Interacts with NHERF1. Interacts with TMEM174; regulates SLC34A1 internalization by PTH and FGF23. Kidney.

It is found in the apical cell membrane. It localises to the cell membrane. The enzyme catalyses 3 Na(+)(out) + phosphate(out) = 3 Na(+)(in) + phosphate(in). Its activity is regulated as follows. Transport activity is significantly increased in response to dietary phosphate deprivation. In terms of biological role, involved in actively transporting phosphate into cells via Na(+) cotransport in the renal brush border membrane. The cotransport has a Na(+):Pi stoichiometry of 3:1 and is electrogenic. The polypeptide is Sodium-dependent phosphate transport protein 2A (Rattus norvegicus (Rat)).